The sequence spans 351 residues: Heat shock factor protein HSF30 (351 aa).

Residues 29–123 (PPPFLSKTYE…LLKTIKRRRN (95 aa)) mediate DNA binding.

This sequence belongs to the HSF family. In terms of assembly, homotrimer. Post-translationally, exhibits temperature-dependent phosphorylation.

Its subcellular location is the nucleus. Functionally, DNA-binding protein that specifically binds heat shock promoter elements (HSE) and activates transcription. The protein is Heat shock factor protein HSF30 (HSF30) of Solanum peruvianum (Peruvian tomato).